Consider the following 303-residue polypeptide: Sporulation regulatory protein (303 aa).

The region spanning 26–213 (TGRLRAGLRK…HRVNDKQTAE (188 aa)) is the FtsK domain. Residue 43–50 (GANHSGKS) coordinates ATP.

In terms of biological role, involved in sporulation inhibition and pock formation. This Streptomyces azureus protein is Sporulation regulatory protein (spi).